Reading from the N-terminus, the 568-residue chain is Small ribosomal subunit protein bS1 (568 aa).

6 consecutive S1 motif domains span residues 39–100, 118–184, 205–273, 290–360, 377–447, and 464–533; these read KTVV…LSRE, GEFV…VSRR, GMIL…LGIK, GKKM…LSIK, GTII…LGIK, and GTIV…LSVK.

It belongs to the bacterial ribosomal protein bS1 family.

In terms of biological role, binds mRNA; thus facilitating recognition of the initiation point. It is needed to translate mRNA with a short Shine-Dalgarno (SD) purine-rich sequence. In Rickettsia typhi (strain ATCC VR-144 / Wilmington), this protein is Small ribosomal subunit protein bS1 (rpsA).